The chain runs to 205 residues: Small ribosomal subunit protein uS4B (205 aa).

The 64-residue stretch at 94–157 (RRLDNVVFRA…LNLPIVLGTL (64 aa)) folds into the S4 RNA-binding domain.

It belongs to the universal ribosomal protein uS4 family. As to quaternary structure, part of the 30S ribosomal subunit. Contacts protein S5. The interaction surface between S4 and S5 is involved in control of translational fidelity.

One of the primary rRNA binding proteins, it binds directly to 16S rRNA where it nucleates assembly of the body of the 30S subunit. In terms of biological role, with S5 and S12 plays an important role in translational accuracy. This chain is Small ribosomal subunit protein uS4B, found in Nitrosomonas europaea (strain ATCC 19718 / CIP 103999 / KCTC 2705 / NBRC 14298).